A 287-amino-acid polypeptide reads, in one-letter code: Aspartate dehydrogenase domain-containing protein (287 aa).

Ser24 and Ser172 each carry phosphoserine.

Belongs to the L-aspartate dehydrogenase family.

The polypeptide is Aspartate dehydrogenase domain-containing protein (Mus musculus (Mouse)).